We begin with the raw amino-acid sequence, 538 residues long: Syncytin-1 (538 aa).

Residues 1 to 20 form the signal peptide; it reads MALPYHIFLFTVLLPSFTLT. Residues 21–443 lie on the Extracellular side of the membrane; it reads APPPCRCMTS…NTGPWGLLSQ (423 aa). N-linked (GlcNAc...) asparagine glycosylation is present at Asn-169. The CXXC signature appears at 186–189; sequence CWIC. 3 disulfide bridges follow: Cys-186–Cys-189, Cys-186–Cys-405, and Cys-397–Cys-404. N-linked (GlcNAc...) asparagine glycosylation is found at Asn-208, Asn-214, Asn-234, Asn-242, and Asn-281. Residues 320 to 340 are fusion peptide; that stretch reads ILPFVIGAGVLGALGTGIGGI. An immunosuppression region spans residues 380-396; that stretch reads LQNRRALDLLTAERGGT. A CX6CC motif is present at residues 397–405; the sequence is CLFLGEECC. A glycan (N-linked (GlcNAc...) asparagine) is linked at Asn-409. Residues 444–464 traverse the membrane as a helical segment; sequence WMPWILPFLGPLAAIILLLLF. The interval 465 to 484 is essential for the fusiogenic function; it reads GPCIFNLLVNFVSSRIEAVK. Topologically, residues 465–538 are cytoplasmic; sequence GPCIFNLLVN…LLRPNSAGSS (74 aa). Residues 496–538 are disordered; it reads KIYRRPLDRPASPRSDVNDIKGTPPEEILTAQPLLRPNSAGSS.

Belongs to the gamma type-C retroviral envelope protein family. HERV class-I W env subfamily. The mature envelope protein (Env) consists of a trimer of SU-TM heterodimers attached probably by a labile interchain disulfide bond. Interacts with the C-type lectin CD209/DC-SIGN. In terms of processing, specific enzymatic cleavages in vivo yield mature proteins. Envelope glycoproteins are synthesized as an inactive precursor that is heavily N-glycosylated and processed likely by furin in the Golgi to yield the mature SU and TM proteins. The cleavage site between SU and TM requires the minimal sequence [KR]-X-[KR]-R. The CXXC motif is highly conserved across a broad range of retroviral envelope proteins. It is thought to participate in the formation of a labile disulfide bond possibly with the CX6CC motif present in the transmembrane protein.

Its subcellular location is the cell membrane. The protein resides in the virion. Functionally, this endogenous retroviral envelope protein has retained its original fusogenic properties and participates in trophoblast fusion and the formation of a syncytium during placenta morphogenesis. May recognize and induce fusion through binding of SLC1A4 and SLC1A5. In terms of biological role, endogenous envelope proteins may have kept, lost or modified their original function during evolution. Retroviral envelope proteins mediate receptor recognition and membrane fusion during early infection. The surface protein (SU) mediates receptor recognition, while the transmembrane protein (TM) acts as a class I viral fusion protein. The protein may have at least 3 conformational states: pre-fusion native state, pre-hairpin intermediate state, and post-fusion hairpin state. During viral and target cell membrane fusion, the coiled coil regions (heptad repeats) assume a trimer-of-hairpins structure, positioning the fusion peptide in close proximity to the C-terminal region of the ectodomain. The formation of this structure appears to drive apposition and subsequent fusion of membranes. This chain is Syncytin-1 (ERVW-1), found in Pan troglodytes (Chimpanzee).